The following is a 530-amino-acid chain: MKFKKIILALACLSSPLYADQDQQLKSEIQRLQHQAEDLQAQLNRLQKQLANHKSSQQKHEQQAATKPAEPQSKPTVKSGAAIEEKYHSSKVEVHAPDAHPESISFYPTALIADNRVVTYIAGTPVVSSPFLGDRPAFDGSDYIVNISSINRDVRLLQQRRRLYRAYQKIGYPIPNMPIISLSGKTEPAATFNNPFRSTNTDGDITLGSSELDVAAALNENVEAYIAIAYDESPPAIGPRVNNSAFNLNMGFVNIGNLDKSPLYFTAGQVYVPFGRYSSAMVSSPVTMNLARTKTRPVIFGYKSQGDTGPFGAVYGYRSDTTLGRSGVGGVNLGYIFGFDNDINGEIGGGFISSVADAGGMQSTGSNVGTTFGGFGSITNGNENVRKTKAADVHGHVGYDRYNLTLEWVGAIQSFRPQDLSFNGQGARPQAAQAELGMTFMAFNRPASIGVGYQWTKEALALNLPKRRYVGVFNISIWKDTVESIEYRHDIDYGITQFANGAAPQGFVNLPTLGTGKSADTVSAQIGVYF.

Positions 1–19 are cleaved as a signal peptide; sequence MKFKKIILALACLSSPLYA. Positions 20–66 form a coiled coil; the sequence is DQDQQLKSEIQRLQHQAEDLQAQLNRLQKQLANHKSSQQKHEQQAAT. Positions 50–81 are disordered; that stretch reads LANHKSSQQKHEQQAATKPAEPQSKPTVKSGA.

The protein belongs to the UPF0422 family.

This chain is UPF0422 protein lpl2888, found in Legionella pneumophila (strain Lens).